The following is a 109-amino-acid chain: Parvalbumin beta (109 aa).

2 consecutive EF-hand domains span residues K38–K73 and L77–G109. Positions 51, 53, 55, 57, 59, 62, 90, 92, 94, 96, and 101 each coordinate Ca(2+).

Belongs to the parvalbumin family.

Its function is as follows. In muscle, parvalbumin is thought to be involved in relaxation after contraction. It binds two calcium ions. The sequence is that of Parvalbumin beta from Boa constrictor (Boa).